The chain runs to 314 residues: Dihydroorotate dehydrogenase (fumarate) (314 aa).

Residues K46, 70–74, and N130 each bind substrate; that span reads NSMGL. Residue 46 to 47 participates in FMN binding; it reads KS. N130 serves as a coordination point for FMN. Active-site nucleophile residues include S132 and C133. Positions 167 and 195 each coordinate FMN. Residue 196 to 197 coordinates substrate; the sequence is NS. FMN-binding positions include G224, 252–253, and 274–275; these read GG and GT.

The protein belongs to the dihydroorotate dehydrogenase family. Type 1 subfamily. As to quaternary structure, homodimer. FMN serves as cofactor.

It localises to the cytoplasm. It catalyses the reaction (S)-dihydroorotate + fumarate = orotate + succinate. It participates in pyrimidine metabolism; UMP biosynthesis via de novo pathway. In terms of biological role, catalyzes the conversion of dihydroorotate to orotate with fumarate as the electron acceptor. This is Dihydroorotate dehydrogenase (fumarate) (URA1) from Saccharomyces paradoxus (Yeast).